The chain runs to 1729 residues: Cullin-7 (1729 aa).

A disordered region spans residues 350 to 388; that stretch reads DRPRSSARSPGSIFQPQLADVSPGLPATQAQPSFRRSRH. Position 371 is a phosphoserine (serine 371). Residues 392–465 form the CPH domain; it reads RSEFASGNTY…HWHMLEILGF (74 aa). Residues 632–642 are compositionally biased toward basic and acidic residues; it reads SEDAAKVEAKE. The interval 632–654 is disordered; the sequence is SEDAAKVEAKEPPSQSPNTPLQR. Residues 845–1024 form the DOC domain; the sequence is PINIPFFDVF…HTRLFYMVRA (180 aa). The segment at 1373 to 1405 is disordered; sequence VGHGASGKEHKSEKEEEAGAAAAVDVAEGEEEE. Lysine 1607 participates in a covalent cross-link: Glycyl lysine isopeptide (Lys-Gly) (interchain with G-Cter in NEDD8).

This sequence belongs to the cullin family. Component of the 3M complex, composed of core components CUL7, CCDC8 and OBSL1. Component of the Cul7-RING(FBXW8) complex consisting of CUL7, RBX1, SKP1 and FBXW8. Within the Cul7-RING(FBXW8) complex interacts with FBXW8 and RBX1, but not with SKP1. Interacts with CUL1 (via the C-terminal domain); the interaction seems to be mediated by FBXW8; it is likely specific to FBXW8, but not other F-box proteins. Interacts (via the CPH domain) with p53/TP53; the interaction preferentially involves tetrameric and dimeric p53/TP53; this interaction recruits p53/TP53 for ubiquitination by neddylated CUL1-RBX1. The CUL7-CUL9 heterodimer seems to interact specifically with p53/TP53. Interacts with FBXW8; interaction is mutually exclusive of binding to CUL9 or p53/TP53. Interacts with CUL9; leading to inhibited CUL9 activity. Interacts with OBSL1. Interacts (as part of the 3M complex) with HDAC4 and HDAC5; it is negatively regulated by ANKRA2.

The protein localises to the cytoplasm. It localises to the cytoskeleton. The protein resides in the microtubule organizing center. It is found in the centrosome. Its subcellular location is the perinuclear region. The protein localises to the golgi apparatus. It functions in the pathway protein modification; protein ubiquitination. Functionally, core component of the 3M and Cul7-RING(FBXW8) complexes, which mediate the ubiquitination and subsequent proteasomal degradation of target proteins. Core component of the 3M complex, a complex required to regulate microtubule dynamics and genome integrity. It is unclear how the 3M complex regulates microtubules, it could act by controlling the level of a microtubule stabilizer. The Cul7-RING(FBXW8) complex alone lacks ubiquitination activity and does not promote polyubiquitination and proteasomal degradation of p53/TP53. However it mediates recruitment of p53/TP53 for ubiquitination by neddylated CUL1-RBX1. Interaction with CUL9 is required to inhibit CUL9 activity and ubiquitination of BIRC5. The Cul7-RING(FBXW8) complex also mediates ubiquitination and consequent degradation of target proteins such as GORASP1, IRS1 and MAP4K1/HPK1. Ubiquitination of GORASP1 regulates Golgi morphogenesis and dendrite patterning in brain. Mediates ubiquitination and degradation of IRS1 in a mTOR-dependent manner: the Cul7-RING(FBXW8) complex recognizes and binds IRS1 previously phosphorylated by S6 kinase (RPS6KB1 or RPS6KB2). The Cul7-RING(FBXW8) complex also mediates ubiquitination of MAP4K1/HPK1: recognizes and binds autophosphorylated MAP4K1/HPK1, leading to its degradation, thereby affecting cell proliferation and differentiation. Acts as a regulator in trophoblast cell epithelial-mesenchymal transition and placental development. While the Cul7-RING(FBXW8) and the 3M complexes are associated and involved in common processes, CUL7 and the Cul7-RING(FBXW8) complex may have additional functions. Probably plays a role in the degradation of proteins involved in endothelial proliferation and/or differentiation. The polypeptide is Cullin-7 (CUL7) (Pongo abelii (Sumatran orangutan)).